Here is a 305-residue protein sequence, read N- to C-terminus: Ribosomal RNA small subunit methyltransferase H (305 aa).

Residues 33-35, Asp52, Asp97, and Gln104 each bind S-adenosyl-L-methionine; that span reads GGH.

The protein belongs to the methyltransferase superfamily. RsmH family.

It localises to the cytoplasm. It catalyses the reaction cytidine(1402) in 16S rRNA + S-adenosyl-L-methionine = N(4)-methylcytidine(1402) in 16S rRNA + S-adenosyl-L-homocysteine + H(+). Its function is as follows. Specifically methylates the N4 position of cytidine in position 1402 (C1402) of 16S rRNA. This chain is Ribosomal RNA small subunit methyltransferase H, found in Campylobacter lari (strain RM2100 / D67 / ATCC BAA-1060).